Here is a 423-residue protein sequence, read N- to C-terminus: CinA-like protein (423 aa).

Belongs to the CinA family.

The polypeptide is CinA-like protein (Desulforapulum autotrophicum (strain ATCC 43914 / DSM 3382 / VKM B-1955 / HRM2) (Desulfobacterium autotrophicum)).